The sequence spans 94 residues: Cell division topological specificity factor (94 aa).

It belongs to the MinE family.

In terms of biological role, prevents the cell division inhibition by proteins MinC and MinD at internal division sites while permitting inhibition at polar sites. This ensures cell division at the proper site by restricting the formation of a division septum at the midpoint of the long axis of the cell. This Hamiltonella defensa subsp. Acyrthosiphon pisum (strain 5AT) protein is Cell division topological specificity factor.